The sequence spans 172 residues: Myosin regulatory light chain 12B (172 aa).

Residues 1-16 (MSSKKAKTKTTKKRPQ) show a composition bias toward basic residues. Positions 1 to 20 (MSSKKAKTKTTKKRPQRATS) are disordered. The residue at position 19 (threonine 19) is a Phosphothreonine; by MLCK and ZIPK/DAPK3. Serine 20 carries the phosphoserine; by MLCK and ZIPK/DAPK3 modification. 3 EF-hand domains span residues 29 to 64 (SQIQ…LGKN), 98 to 133 (DPED…MGDR), and 134 to 169 (FTDE…GAKD). 4 residues coordinate Ca(2+): aspartate 42, asparagine 44, aspartate 46, and aspartate 53.

Myosin is a hexamer of 2 heavy chains and 4 light chains: interacts with myosin heavy chain MYO19. Post-translationally, phosphorylation increases the actin-activated myosin ATPase activity and thereby regulates the contractile activity. It is required to generate the driving force in the migration of the cells but not necessary for localization of myosin-2 at the leading edge. Phosphorylation is reduced following epigallocatechin-3-O-gallate treatment. In terms of tissue distribution, ubiquitously expressed in various hematopoietic cells.

Myosin regulatory subunit that plays an important role in regulation of both smooth muscle and nonmuscle cell contractile activity via its phosphorylation. Phosphorylation triggers actin polymerization in vascular smooth muscle. Implicated in cytokinesis, receptor capping, and cell locomotion. The protein is Myosin regulatory light chain 12B (MYL12B) of Homo sapiens (Human).